The primary structure comprises 422 residues: Proline-rich protein 22 (422 aa).

Disordered stretches follow at residues 1–35, 306–325, and 363–422; these read MQHPKPFCAPAAPQEGFSPQSLEGAEVLGNQPAPT, LCEVPGPALPDSSGGNSADD, and EEQP…ATPH. Positions 383–400 are enriched in basic residues; the sequence is GKRKASTAKKGKPGRKAR. Over residues 413 to 422 the composition is skewed to basic and acidic residues; sequence PREDLGATPH.

The sequence is that of Proline-rich protein 22 (PRR22) from Homo sapiens (Human).